The primary structure comprises 552 residues: N-acetylglucosamine-6-sulfatase (552 aa).

The signal sequence occupies residues 1 to 36 (MRLLPLAPGRLRRGSPRHLPSCSPALLLLVLGGCLG). Ca(2+) contacts are provided by Asp55, Asp56, and Cys91. Cys91 (nucleophile) is an active-site residue. Cys91 bears the 3-oxoalanine (Cys) mark. Asn111, Asn117, Asn183, Asn198, Asn210, Asn279, and Asn317 each carry an N-linked (GlcNAc...) asparagine glycan. Ca(2+) is bound by residues Asp326 and Asn327. 6 N-linked (GlcNAc...) asparagine glycosylation sites follow: Asn362, Asn387, Asn405, Asn422, Asn449, and Asn480. The residue at position 541 (Ser541) is a Phosphoserine.

This sequence belongs to the sulfatase family. Requires Ca(2+) as cofactor. In terms of processing, the form A (78 kDa) is processed by internal peptidase cleavage to a 32 kDa N-terminal species (form B) and a 48 kDa C-terminal species. The conversion to 3-oxoalanine (also known as C-formylglycine, FGly), of a serine or cysteine residue in prokaryotes and of a cysteine residue in eukaryotes, is critical for catalytic activity.

It is found in the lysosome. It carries out the reaction Hydrolysis of the 6-sulfate groups of the N-acetyl-D-glucosamine 6-sulfate units of heparan sulfate and keratan sulfate.. In terms of biological role, hydrolyzes 6-sulfate groups in N-acetyl-d-glucosaminide units of heparin sulfate and keratan sulfate. The polypeptide is N-acetylglucosamine-6-sulfatase (GNS) (Homo sapiens (Human)).